The sequence spans 229 residues: MKRKNIALIPAAGIGARFGADKPKQYVEIGSKTVLEHTLGIFERHEGVDLTVVVVSPEDTFADKVQTAFPQVRVWKNGGQTRAETVRNGVAKLLETGLAAETDNILVHDAARCCLPSEALTRLIEQAGNAAEGGILAIPVADTLKRADGGNISATVERTSLWQAQTPQLFRAGLLHRALAAENLDGITDEASAVEKLGIHPLLVQGDARNLKLTQPQDAYIVRLLLDAV.

The protein belongs to the IspD/TarI cytidylyltransferase family. IspD subfamily.

It carries out the reaction 2-C-methyl-D-erythritol 4-phosphate + CTP + H(+) = 4-CDP-2-C-methyl-D-erythritol + diphosphate. Its pathway is isoprenoid biosynthesis; isopentenyl diphosphate biosynthesis via DXP pathway; isopentenyl diphosphate from 1-deoxy-D-xylulose 5-phosphate: step 2/6. Its function is as follows. Catalyzes the formation of 4-diphosphocytidyl-2-C-methyl-D-erythritol from CTP and 2-C-methyl-D-erythritol 4-phosphate (MEP). The sequence is that of 2-C-methyl-D-erythritol 4-phosphate cytidylyltransferase from Neisseria meningitidis serogroup C / serotype 2a (strain ATCC 700532 / DSM 15464 / FAM18).